The primary structure comprises 75 residues: Cytochrome c oxidase subunit 6C (75 aa).

The Mitochondrial matrix portion of the chain corresponds to 1 to 13; it reads MASEVLVKPQMRG. Residues 14-54 traverse the membrane as a helical segment; the sequence is LLARRLRIHMVGAFLVSLGVAALYKFGVAEPRKKAYADFYK. Residues 55 to 75 are Mitochondrial intermembrane-facing; it reads NYSAEKDFEEMKKAGLFRSIK.

It belongs to the cytochrome c oxidase subunit 6c family. Component of the cytochrome c oxidase (complex IV, CIV), a multisubunit enzyme composed of 14 subunits. The complex is composed of a catalytic core of 3 subunits MT-CO1, MT-CO2 and MT-CO3, encoded in the mitochondrial DNA, and 11 supernumerary subunits COX4I, COX5A, COX5B, COX6A, COX6B, COX6C, COX7A, COX7B, COX7C, COX8 and NDUFA4, which are encoded in the nuclear genome. The complex exists as a monomer or a dimer and forms supercomplexes (SCs) in the inner mitochondrial membrane with NADH-ubiquinone oxidoreductase (complex I, CI) and ubiquinol-cytochrome c oxidoreductase (cytochrome b-c1 complex, complex III, CIII), resulting in different assemblies (supercomplex SCI(1)III(2)IV(1) and megacomplex MCI(2)III(2)IV(2)).

It is found in the mitochondrion inner membrane. The protein operates within energy metabolism; oxidative phosphorylation. Functionally, component of the cytochrome c oxidase, the last enzyme in the mitochondrial electron transport chain which drives oxidative phosphorylation. The respiratory chain contains 3 multisubunit complexes succinate dehydrogenase (complex II, CII), ubiquinol-cytochrome c oxidoreductase (cytochrome b-c1 complex, complex III, CIII) and cytochrome c oxidase (complex IV, CIV), that cooperate to transfer electrons derived from NADH and succinate to molecular oxygen, creating an electrochemical gradient over the inner membrane that drives transmembrane transport and the ATP synthase. Cytochrome c oxidase is the component of the respiratory chain that catalyzes the reduction of oxygen to water. Electrons originating from reduced cytochrome c in the intermembrane space (IMS) are transferred via the dinuclear copper A center (CU(A)) of subunit 2 and heme A of subunit 1 to the active site in subunit 1, a binuclear center (BNC) formed by heme A3 and copper B (CU(B)). The BNC reduces molecular oxygen to 2 water molecules using 4 electrons from cytochrome c in the IMS and 4 protons from the mitochondrial matrix. The protein is Cytochrome c oxidase subunit 6C (COX6C) of Plecturocebus donacophilus (Bolivian gray titi monkey).